A 141-amino-acid polypeptide reads, in one-letter code: Nucleoside diphosphate kinase (141 aa).

ATP contacts are provided by K11, F59, R87, T93, R104, and N114. The active-site Pros-phosphohistidine intermediate is the H117.

Belongs to the NDK family. Homotetramer. It depends on Mg(2+) as a cofactor.

It localises to the cytoplasm. The enzyme catalyses a 2'-deoxyribonucleoside 5'-diphosphate + ATP = a 2'-deoxyribonucleoside 5'-triphosphate + ADP. It catalyses the reaction a ribonucleoside 5'-diphosphate + ATP = a ribonucleoside 5'-triphosphate + ADP. Major role in the synthesis of nucleoside triphosphates other than ATP. The ATP gamma phosphate is transferred to the NDP beta phosphate via a ping-pong mechanism, using a phosphorylated active-site intermediate. The polypeptide is Nucleoside diphosphate kinase (Nitrosospira multiformis (strain ATCC 25196 / NCIMB 11849 / C 71)).